Reading from the N-terminus, the 141-residue chain is VLSSTDKSNVKAAWDKVGGNVGEYGAEALERMFLSFPTTKTYFPHFDLAHGSSQVKAHGKKVGDALTNAVGHMDDLPGALSALSDLHAYKLRVDPVNFKLLSHCLLVTLANHLPNDFTPAVHASLDKFLASVSTVLTSKYR.

The Globin domain maps to V1 to R141. At S3 the chain carries Phosphoserine. An N6-succinyllysine mark is found at K7 and K11. Residue K16 is modified to N6-acetyllysine; alternate. K16 carries the post-translational modification N6-succinyllysine; alternate. Y24 is modified (phosphotyrosine). Phosphoserine is present on S35. K40 is subject to N6-succinyllysine. H58 contributes to the O2 binding site. H87 lines the heme b pocket. At S102 the chain carries Phosphoserine. At T108 the chain carries Phosphothreonine. 2 positions are modified to phosphoserine: S124 and S131. Residues T134 and T137 each carry the phosphothreonine modification. Position 138 is a phosphoserine (S138).

It belongs to the globin family. In terms of assembly, heterotetramer of two alpha chains and two beta chains. As to expression, red blood cells.

Functionally, involved in oxygen transport from the lung to the various peripheral tissues. Its function is as follows. Hemopressin acts as an antagonist peptide of the cannabinoid receptor CNR1. Hemopressin-binding efficiently blocks cannabinoid receptor CNR1 and subsequent signaling. This chain is Hemoglobin subunit alpha (HBA), found in Pteropus poliocephalus (Grey-headed flying fox).